Here is a 431-residue protein sequence, read N- to C-terminus: Enolase (431 aa).

Q167 serves as a coordination point for (2R)-2-phosphoglycerate. Residue E209 is the Proton donor of the active site. Mg(2+) contacts are provided by D246, E289, and D316. The (2R)-2-phosphoglycerate site is built by K341, R370, S371, and K392. The Proton acceptor role is filled by K341.

Belongs to the enolase family. Component of the RNA degradosome, a multiprotein complex involved in RNA processing and mRNA degradation. It depends on Mg(2+) as a cofactor.

Its subcellular location is the cytoplasm. The protein localises to the secreted. It is found in the cell surface. The enzyme catalyses (2R)-2-phosphoglycerate = phosphoenolpyruvate + H2O. The protein operates within carbohydrate degradation; glycolysis; pyruvate from D-glyceraldehyde 3-phosphate: step 4/5. Catalyzes the reversible conversion of 2-phosphoglycerate (2-PG) into phosphoenolpyruvate (PEP). It is essential for the degradation of carbohydrates via glycolysis. The polypeptide is Enolase (Shewanella halifaxensis (strain HAW-EB4)).